Consider the following 93-residue polypeptide: Small ribosomal subunit protein uS19 (93 aa).

It belongs to the universal ribosomal protein uS19 family.

Its function is as follows. Protein S19 forms a complex with S13 that binds strongly to the 16S ribosomal RNA. The polypeptide is Small ribosomal subunit protein uS19 (Renibacterium salmoninarum (strain ATCC 33209 / DSM 20767 / JCM 11484 / NBRC 15589 / NCIMB 2235)).